We begin with the raw amino-acid sequence, 397 residues long: Tryptophan synthase beta chain (397 aa).

The residue at position 88 (lysine 88) is an N6-(pyridoxal phosphate)lysine.

Belongs to the TrpB family. Tetramer of two alpha and two beta chains. Requires pyridoxal 5'-phosphate as cofactor.

It carries out the reaction (1S,2R)-1-C-(indol-3-yl)glycerol 3-phosphate + L-serine = D-glyceraldehyde 3-phosphate + L-tryptophan + H2O. Its pathway is amino-acid biosynthesis; L-tryptophan biosynthesis; L-tryptophan from chorismate: step 5/5. Functionally, the beta subunit is responsible for the synthesis of L-tryptophan from indole and L-serine. The chain is Tryptophan synthase beta chain from Shewanella amazonensis (strain ATCC BAA-1098 / SB2B).